We begin with the raw amino-acid sequence, 436 residues long: Diaminobutyrate--2-oxoglutarate transaminase (436 aa).

N6-(pyridoxal phosphate)lysine is present on Lys-269.

This sequence belongs to the class-III pyridoxal-phosphate-dependent aminotransferase family. Pyridoxal 5'-phosphate is required as a cofactor.

The catalysed reaction is L-2,4-diaminobutanoate + 2-oxoglutarate = L-aspartate 4-semialdehyde + L-glutamate. It participates in amine and polyamine biosynthesis; ectoine biosynthesis; L-ectoine from L-aspartate 4-semialdehyde: step 1/3. Its function is as follows. Catalyzes reversively the conversion of L-aspartate beta-semialdehyde (ASA) to L-2,4-diaminobutyrate (DABA) by transamination with L-glutamate. In Nocardia farcinica (strain IFM 10152), this protein is Diaminobutyrate--2-oxoglutarate transaminase (ectB).